A 78-amino-acid polypeptide reads, in one-letter code: Apolipoprotein C-I (78 aa).

A signal peptide spans 1–26 (MRLILWLPVLVVVLLMVLEGPAPAQG).

The protein belongs to the apolipoprotein C1 family.

It localises to the secreted. Inhibitor of lipoprotein binding to the low density lipoprotein (LDL) receptor, LDL receptor-related protein, and very low density lipoprotein (VLDL) receptor. Associates with high density lipoproteins (HDL) and the triacylglycerol-rich lipoproteins in the plasma and makes up about 10% of the protein of the VLDL and 2% of that of HDL. Appears to interfere directly with fatty acid uptake and is also the major plasma inhibitor of cholesteryl ester transfer protein (CETP). Binds free fatty acids and reduces their intracellular esterification. Modulates the interaction of APOE with beta-migrating VLDL and inhibits binding of beta-VLDL to the LDL receptor-related protein. In Lynx pardinus (Iberian lynx), this protein is Apolipoprotein C-I (APOC1).